A 472-amino-acid polypeptide reads, in one-letter code: L-aspartate oxidase (472 aa).

FAD contacts are provided by residues 7 to 10, serine 29, 36 to 37, 42 to 43, and aspartate 191; these read SGIA, ST, and GG. The Proton donor/acceptor role is filled by arginine 257. FAD is bound by residues glutamate 337 and 353-354; that span reads SL.

Belongs to the FAD-dependent oxidoreductase 2 family. NadB subfamily. As to quaternary structure, monomer. Requires FAD as cofactor.

The protein resides in the cytoplasm. The catalysed reaction is L-aspartate + O2 = iminosuccinate + H2O2. The protein operates within cofactor biosynthesis; NAD(+) biosynthesis; iminoaspartate from L-aspartate (oxidase route): step 1/1. Functionally, catalyzes the oxidation of L-aspartate to iminoaspartate, the first step in the de novo biosynthesis of NAD(+). Can also use L-asparagine, but not L-phenylalanine, L-glutamate, glycine, L-proline, L-alanine and D-aspartate. In Sulfurisphaera tokodaii (strain DSM 16993 / JCM 10545 / NBRC 100140 / 7) (Sulfolobus tokodaii), this protein is L-aspartate oxidase.